We begin with the raw amino-acid sequence, 607 residues long: Elongation factor 4 (607 aa).

In terms of domain architecture, tr-type G spans 11–193 (EKIRNFSIIA…QIVEKVPAPT (183 aa)). GTP contacts are provided by residues 23-28 (DHGKST) and 140-143 (NKID).

The protein belongs to the TRAFAC class translation factor GTPase superfamily. Classic translation factor GTPase family. LepA subfamily.

The protein localises to the cell membrane. The catalysed reaction is GTP + H2O = GDP + phosphate + H(+). Functionally, required for accurate and efficient protein synthesis under certain stress conditions. May act as a fidelity factor of the translation reaction, by catalyzing a one-codon backward translocation of tRNAs on improperly translocated ribosomes. Back-translocation proceeds from a post-translocation (POST) complex to a pre-translocation (PRE) complex, thus giving elongation factor G a second chance to translocate the tRNAs correctly. Binds to ribosomes in a GTP-dependent manner. This chain is Elongation factor 4, found in Streptococcus pneumoniae (strain Hungary19A-6).